Here is a 170-residue protein sequence, read N- to C-terminus: Group 2 truncated hemoglobin 3-1 (170 aa).

Residue histidine 98 coordinates heme b.

Belongs to the truncated hemoglobin family. Group II subfamily. Homodimer when ferric.

Its function is as follows. Hemoglobin-like protein that exhibits an unusual concentration-independent binding of O(2) and CO. Required for general plant development and during nodulation. May promote shoot organogenesis from root explants. This chain is Group 2 truncated hemoglobin 3-1, found in Medicago truncatula (Barrel medic).